Here is a 295-residue protein sequence, read N- to C-terminus: Protein gurken (295 aa).

A signal peptide spans 1–26; the sequence is MMQIPFTRIFKVIFVLSTIVAVTDCC. The Extracellular portion of the chain corresponds to 27-247; sequence SSRILLLREH…TAQRKVRMAH (221 aa). Disordered stretches follow at residues 78–111 and 124–175; these read EASAQEEADQLHPDTDPNPDSGGQLPNADDSIAA and TDTW…NDKE. The segment covering 124-139 has biased composition (polar residues); it reads TDTWLASESSTPITDS. Low complexity-rich tracts occupy residues 140–152 and 159–171; these read ETVTTPETVTHTG and SSSSTPDSTTPSP. The EGF-like domain maps to 179–224; that stretch reads QMLPCSEAYNTSFCLNGGHCFQHPMVNNTVFHSCLCVNDYDGERCA. 3 cysteine pairs are disulfide-bonded: cysteine 183/cysteine 198, cysteine 192/cysteine 212, and cysteine 214/cysteine 223. Residues asparagine 188 and asparagine 205 are each glycosylated (N-linked (GlcNAc...) asparagine). Residues 215 to 245 are interaction with cni; the sequence is VNDYDGERCAYKSWNGDYIYSPPTAQRKVRM. Residues 248–268 traverse the membrane as a helical segment; sequence IVFSFPVLLMLSSLYVLFAAV. Residues 269–295 are Cytoplasmic-facing; sequence FMLRNVPDYRRKQQQLHLHKQRFFVRC.

In terms of assembly, interacts with cni. Expressed in nurse cells and oocyte up to oogenesis stage 7. Specifically accumulates in dorsal anterior corner of the oocyte during stages 9/10, at later stages expression is seen as an anterior ring. In stage 10 ovaries, it is concentrated between the oocyte nucleus and the adjacent oolemma. During vitellogenesis stage it can be detected at the oocyte surface, especially on the microvilli. It is also found at the microvilli covering the apical surface of the follicular epithelium and within follicle cells.

Its subcellular location is the cell membrane. Functionally, critical for defining the anterior-posterior and dorsal-ventral axes of the egg. May signal directly to dorsal follicle cells through the receptor torpedo (top). During oogenesis this signaling pathway instructs follicle cells to follow a dorsal pathway of development rather than the default ventral pathway. In Drosophila melanogaster (Fruit fly), this protein is Protein gurken (grk).